Consider the following 213-residue polypeptide: Urease accessory protein UreE (213 aa).

The tract at residues Glu170–Arg213 is disordered. Residues His182–His200 show a composition bias toward basic and acidic residues.

The protein belongs to the UreE family.

The protein localises to the cytoplasm. In terms of biological role, involved in urease metallocenter assembly. Binds nickel. Probably functions as a nickel donor during metallocenter assembly. This is Urease accessory protein UreE from Burkholderia mallei (strain NCTC 10229).